Reading from the N-terminus, the 228-residue chain is DNA mismatch repair protein MutH (228 aa).

Belongs to the MutH family.

It is found in the cytoplasm. Sequence-specific endonuclease that cleaves unmethylated GATC sequences. It is involved in DNA mismatch repair. This is DNA mismatch repair protein MutH from Yersinia pseudotuberculosis serotype IB (strain PB1/+).